The sequence spans 110 residues: UPF0122 protein SMU_1061 (110 aa).

It belongs to the UPF0122 family.

Might take part in the signal recognition particle (SRP) pathway. This is inferred from the conservation of its genetic proximity to ftsY/ffh. May be a regulatory protein. The polypeptide is UPF0122 protein SMU_1061 (ylxM) (Streptococcus mutans serotype c (strain ATCC 700610 / UA159)).